An 83-amino-acid chain; its full sequence is Neurotoxin LmNaTx34.5 (83 aa).

The N-terminal stretch at 1–15 is a signal peptide; the sequence is FILVVIALMVIEVKS. The LCN-type CS-alpha/beta domain occupies 16–82; the sequence is DGYLMVRAGR…IWTYEKNTCS (67 aa). 4 cysteine pairs are disulfide-bonded: C29/C81, C33/C54, C40/C61, and C44/C63.

This sequence belongs to the long (4 C-C) scorpion toxin superfamily. Sodium channel inhibitor family. Beta subfamily. In terms of tissue distribution, expressed by the venom gland.

The protein localises to the secreted. Functionally, binds voltage-independently at site-4 of sodium channels (Nav) and shift the voltage of activation toward more negative potentials thereby affecting sodium channel activation and promoting spontaneous and repetitive firing. The chain is Neurotoxin LmNaTx34.5 from Lychas mucronatus (Chinese swimming scorpion).